The following is a 502-amino-acid chain: Na(+)/H(+) antiporter NhaB (502 aa).

Helical transmembrane passes span Ala27–Leu49, Pro66–Phe86, Val95–Tyr115, Ile128–Leu148, Thr149–Ala169, Phe241–Ile261, Ile299–Leu318, Phe350–Ile370, Met394–Val414, Ala450–Ile470, and Met477–Tyr497.

Belongs to the NhaB Na(+)/H(+) (TC 2.A.34) antiporter family.

The protein localises to the cell inner membrane. The catalysed reaction is 2 Na(+)(in) + 3 H(+)(out) = 2 Na(+)(out) + 3 H(+)(in). In terms of biological role, na(+)/H(+) antiporter that extrudes sodium in exchange for external protons. This Teredinibacter turnerae (strain ATCC 39867 / T7901) protein is Na(+)/H(+) antiporter NhaB.